The following is a 473-amino-acid chain: Photosystem II CP43 reaction center protein (473 aa).

Positions 1-14 are excised as a propeptide; the sequence is MKILYSQRRFYHVE. Helical transmembrane passes span 69-93, 134-155, 178-200, 255-275, and 291-312; these read LFEV…PHLA, LIGP…RDKN, KAMF…RYIN, KPFG…LSYS, and WYNN…ASQA. Residue Glu367 coordinates [CaMn4O5] cluster. A helical membrane pass occupies residues 447 to 471; sequence RARAAAAGFEKGINRENEPVLSMKL.

Belongs to the PsbB/PsbC family. PsbC subfamily. In terms of assembly, PSII is composed of 1 copy each of membrane proteins PsbA, PsbB, PsbC, PsbD, PsbE, PsbF, PsbH, PsbI, PsbJ, PsbK, PsbL, PsbM, PsbT, PsbY, PsbZ, Psb30/Ycf12, at least 3 peripheral proteins of the oxygen-evolving complex and a large number of cofactors. It forms dimeric complexes. Binds multiple chlorophylls and provides some of the ligands for the Ca-4Mn-5O cluster of the oxygen-evolving complex. It may also provide a ligand for a Cl- that is required for oxygen evolution. PSII binds additional chlorophylls, carotenoids and specific lipids. is required as a cofactor.

The protein localises to the plastid. It localises to the chloroplast thylakoid membrane. One of the components of the core complex of photosystem II (PSII). It binds chlorophyll and helps catalyze the primary light-induced photochemical processes of PSII. PSII is a light-driven water:plastoquinone oxidoreductase, using light energy to abstract electrons from H(2)O, generating O(2) and a proton gradient subsequently used for ATP formation. The chain is Photosystem II CP43 reaction center protein from Galdieria sulphuraria (Red alga).